The primary structure comprises 477 residues: MQILFVASEVGPWSKTGGLGDVAGALPQALAERGNEVAVVTPRHGSIDPHAAGLQPVRTALHVRGEPVALWVKRGPAPVYFVEHPHLFGSRRGLYGEGGRDHGDNAERFAFLTRAALALPAALGLRPRILHLNDWQCGLGPWLLRHEHARDPALAGARTVFTIHNLAYQGLFPKQVLPALGLPWEVFRWEAMEFFDQLSFMKAGLAFADALTTVSPTYAREILTPEGGASLDALLRHRARDLHGILNGIDVHAWDPARDPHLPAHFGAGDLTGKAACKAALQREVGLPVRPEVPVAGLVTRLAEQKGIDLVAAALPALLARDVQVVLLGSGDAAYEQAFARAAREHPDRVAARIGFDEGLAHRIEAGADLFLMPSRFEPCGLNQMYSLRYGTVPVVRAVGGLADTVEDFDGFARGTGFRFSEYTPQALLTATRRALDVFRDRRAWRGLVERGMAEDNSWERSAARYEALYRTLAPGR.

Lys15 provides a ligand contact to ADP-alpha-D-glucose.

Belongs to the glycosyltransferase 1 family. Bacterial/plant glycogen synthase subfamily.

It catalyses the reaction [(1-&gt;4)-alpha-D-glucosyl](n) + ADP-alpha-D-glucose = [(1-&gt;4)-alpha-D-glucosyl](n+1) + ADP + H(+). The protein operates within glycan biosynthesis; glycogen biosynthesis. Its function is as follows. Synthesizes alpha-1,4-glucan chains using ADP-glucose. The protein is Glycogen synthase of Anaeromyxobacter dehalogenans (strain 2CP-1 / ATCC BAA-258).